The sequence spans 357 residues: Guanine nucleotide-binding protein alpha-2 subunit (357 aa).

Gly2 carries N-myristoyl glycine lipidation. The S-palmitoyl cysteine moiety is linked to residue Cys4. Residues 30 to 356 (NEVKLLLLGA…TQCVMKAGLY (327 aa)) enclose the G-alpha domain. The tract at residues 33–46 (KLLLLGAGESGKST) is G1 motif. The GTP site is built by Glu41, Ser42, Gly43, Lys44, Ser45, and Thr46. Ser45 lines the Mg(2+) pocket. Residue Ser113 is modified to Phosphoserine. 8 residues coordinate GTP: Asp154, Leu179, Thr185, Gly207, Asn272, Lys273, Asp275, and Ala328. Positions 177–185 (DILHTRVMT) are G2 motif. A Mg(2+)-binding site is contributed by Thr185. Positions 200–209 (FRLVDVGGQR) are G3 motif. The tract at residues 268–275 (ILFLNKSD) is G4 motif. The interval 326-331 (TCATDT) is G5 motif.

This sequence belongs to the G-alpha family. In terms of assembly, g proteins are composed of 3 units; alpha, beta and gamma. The alpha chain contains the guanine nucleotide binding site. Interacts with the RAP guanine nucleotide exchange factor glfB. The cofactor is Mg(2+). In terms of processing, ser-113 is transiently phosphorylated following stimulation with extracellular cAMP.

Guanine nucleotide-binding proteins (G proteins) are involved as modulators or transducers in various transmembrane signaling systems. G alpha-2 is required for the early aggregation process and most of the known cAMP receptor-mediated responses. Interacts with downstream effector gflB, a Rap guanine nucleotide exchange factor, to regulate the balance between Ras and Rap signaling at the leading edge of chemotaxing cells. This is Guanine nucleotide-binding protein alpha-2 subunit (gpaB) from Dictyostelium discoideum (Social amoeba).